The sequence spans 180 residues: ATP-dependent protease subunit HslV (180 aa).

Thr-5 is an active-site residue. Residues Gly-161, Cys-164, and Thr-167 each contribute to the Na(+) site.

Belongs to the peptidase T1B family. HslV subfamily. A double ring-shaped homohexamer of HslV is capped on each side by a ring-shaped HslU homohexamer. The assembly of the HslU/HslV complex is dependent on binding of ATP.

The protein resides in the cytoplasm. The enzyme catalyses ATP-dependent cleavage of peptide bonds with broad specificity.. Allosterically activated by HslU binding. In terms of biological role, protease subunit of a proteasome-like degradation complex believed to be a general protein degrading machinery. This chain is ATP-dependent protease subunit HslV, found in Campylobacter curvus (strain 525.92).